Here is a 39-residue protein sequence, read N- to C-terminus: Photosystem II reaction center protein X (39 aa).

The helical transmembrane segment at 10–30 threads the bilayer; the sequence is WSLLWGTAIVVIPVTVGLIFI.

Belongs to the PsbX family. Type 1 subfamily. PSII is composed of 1 copy each of membrane proteins PsbA, PsbB, PsbC, PsbD, PsbE, PsbF, PsbH, PsbI, PsbJ, PsbK, PsbL, PsbM, PsbT, PsbX, PsbY, PsbZ, Psb30/Ycf12, peripheral proteins PsbO, CyanoQ (PsbQ), PsbU, PsbV and a large number of cofactors. It forms dimeric complexes.

It localises to the cellular thylakoid membrane. Functionally, involved in the binding and/or turnover of quinones at the Q(B) site of photosystem II (PSII). PSII is a light-driven water plastoquinone oxidoreductase, using light energy to abstract electrons from H(2)O, generating a proton gradient subsequently used for ATP formation. This is Photosystem II reaction center protein X from Nostoc punctiforme (strain ATCC 29133 / PCC 73102).